The primary structure comprises 190 residues: uncharacterized protein (190 aa).

It to E.coli YdjR.

This is an uncharacterized protein from Pseudomonas putida (Arthrobacter siderocapsulatus).